A 244-amino-acid chain; its full sequence is Gas vesicle protein F (244 aa).

Residues 1–109 (MTVGLYLYGI…QLKELFAKLS (109 aa)) are N-terminus. Residues 110–233 (GQREVSIKIF…GDRLRIRYNN (124 aa)) are C-terminus, modifed ferredoxin fold. The tract at residues 234-244 (LTAPYTFAQLI) is C-tail.

This sequence belongs to the gas vesicle GvpF/GvpL family. As to quaternary structure, binds GvpA.

Its subcellular location is the gas vesicle. Functionally, a minor component of the gas vesicle, may be involved in preventing GvpA aggregation during gas vesicle nucleation. Gas vesicles (GV) are hollow, gas filled proteinaceous nanostructures. During planktonic growth they allow positioning of the organism at a favorable depth for light or nutrient acquisition. This chain is Gas vesicle protein F, found in Microcystis aeruginosa (strain PCC 7806).